The chain runs to 201 residues: 3-isopropylmalate dehydratase small subunit (201 aa).

Belongs to the LeuD family. LeuD type 1 subfamily. As to quaternary structure, heterodimer of LeuC and LeuD.

It catalyses the reaction (2R,3S)-3-isopropylmalate = (2S)-2-isopropylmalate. It functions in the pathway amino-acid biosynthesis; L-leucine biosynthesis; L-leucine from 3-methyl-2-oxobutanoate: step 2/4. Functionally, catalyzes the isomerization between 2-isopropylmalate and 3-isopropylmalate, via the formation of 2-isopropylmaleate. The chain is 3-isopropylmalate dehydratase small subunit from Rhodopseudomonas palustris (strain BisA53).